The sequence spans 461 residues: PTS system sucrose-specific EIIBC component (461 aa).

The 84-residue stretch at 4–87 (KETAKRLIEL…SKEADIEREE (84 aa)) folds into the PTS EIIB type-1 domain. The Phosphocysteine intermediate; for EIIB activity role is filled by Cys26. Positions 107–461 (KTLSNIFVPI…KINEDEERKK (355 aa)) constitute a PTS EIIC type-1 domain. 10 helical membrane-spanning segments follow: residues 112–132 (IFVP…LLGM), 148–168 (LLDM…GVSA), 178–198 (LGAV…WGLA), 208–228 (FGFD…LLAV), 248–268 (LLVT…IAIG), 289–309 (AGFV…LTGV), 329–349 (LLPI…AVFF), 359–379 (IALP…IFGV), 387–407 (FIAA…THVA), and 430–450 (LIHY…AAFV).

The protein resides in the cell membrane. It carries out the reaction N(pros)-phospho-L-histidyl-[protein](out) + sucrose = sucrose 6(G)-phosphate(in) + L-histidyl-[protein]. The phosphoenolpyruvate-dependent sugar phosphotransferase system (sugar PTS), a major carbohydrate active transport system, catalyzes the phosphorylation of incoming sugar substrates concomitantly with their translocation across the cell membrane. This system is involved in sucrose transport. This is PTS system sucrose-specific EIIBC component (sacP) from Bacillus subtilis (strain 168).